Here is an 82-residue protein sequence, read N- to C-terminus: Small ribosomal subunit protein bS16 (82 aa).

Belongs to the bacterial ribosomal protein bS16 family.

The sequence is that of Small ribosomal subunit protein bS16 from Clostridium botulinum (strain ATCC 19397 / Type A).